A 423-amino-acid polypeptide reads, in one-letter code: Protein TylM3 (423 aa).

The segment covering methionine 1–alanine 21 has biased composition (low complexity). Disordered stretches follow at residues methionine 1–arginine 26 and glycine 117–proline 149. Over residues arginine 139–proline 149 the composition is skewed to basic and acidic residues.

It belongs to the cytochrome P450 family.

Its pathway is antibiotic biosynthesis; tylosin biosynthesis. Involved in the biosynthesis of the macrolide antibiotic tylosin derived from the polyketide lactone tylactone. TylM3 is required for the glycosylation of the 5-hydroxyl group of tylactone to yield 5-O-mycaminosytylactone. This Streptomyces fradiae (Streptomyces roseoflavus) protein is Protein TylM3.